The sequence spans 271 residues: Extracellular metalloprotease ARB_05317 (271 aa).

Positions 1 to 19 (MRFSVLLTGLAAAGSIATA) are cleaved as a signal peptide. Residue Asn-136 is glycosylated (N-linked (GlcNAc...) asparagine). A Zn(2+)-binding site is contributed by His-185. Residue Glu-186 is part of the active site. A Zn(2+)-binding site is contributed by His-189. N-linked (GlcNAc...) asparagine glycosylation occurs at Asn-200. Cys-222 and Cys-248 are oxidised to a cystine.

It belongs to the peptidase M43B family.

The protein resides in the secreted. In terms of biological role, secreted metalloproteinase that allows assimilation of proteinaceous substrates. Plays a pivotal role as a pathogenicity determinant during infections and contributes to the ability of the pathogen to persist within the mammalian host. The protein is Extracellular metalloprotease ARB_05317 of Arthroderma benhamiae (strain ATCC MYA-4681 / CBS 112371) (Trichophyton mentagrophytes).